The chain runs to 437 residues: Serine--tRNA ligase (437 aa).

240 to 242 (TAE) serves as a coordination point for L-serine. 271–273 (RAE) is an ATP binding site. Glutamate 294 serves as a coordination point for L-serine. 358-361 (EISS) serves as a coordination point for ATP. Serine 394 lines the L-serine pocket.

This sequence belongs to the class-II aminoacyl-tRNA synthetase family. Type-1 seryl-tRNA synthetase subfamily. As to quaternary structure, homodimer. The tRNA molecule binds across the dimer.

The protein resides in the cytoplasm. The enzyme catalyses tRNA(Ser) + L-serine + ATP = L-seryl-tRNA(Ser) + AMP + diphosphate + H(+). It carries out the reaction tRNA(Sec) + L-serine + ATP = L-seryl-tRNA(Sec) + AMP + diphosphate + H(+). The protein operates within aminoacyl-tRNA biosynthesis; selenocysteinyl-tRNA(Sec) biosynthesis; L-seryl-tRNA(Sec) from L-serine and tRNA(Sec): step 1/1. Its function is as follows. Catalyzes the attachment of serine to tRNA(Ser). Is also able to aminoacylate tRNA(Sec) with serine, to form the misacylated tRNA L-seryl-tRNA(Sec), which will be further converted into selenocysteinyl-tRNA(Sec). The protein is Serine--tRNA ligase of Methylobacterium nodulans (strain LMG 21967 / CNCM I-2342 / ORS 2060).